A 382-amino-acid polypeptide reads, in one-letter code: Lipid-A-disaccharide synthase (382 aa).

Belongs to the LpxB family.

It carries out the reaction 2-N,3-O-bis[(3R)-3-hydroxytetradecanoyl]-alpha-D-glucosaminyl 1-phosphate + UDP-2-N,3-O-bis[(3R)-3-hydroxytetradecanoyl]-alpha-D-glucosamine = lipid A disaccharide (E. coli) + UDP + H(+). The catalysed reaction is a lipid X + a UDP-2-N,3-O-bis[(3R)-3-hydroxyacyl]-alpha-D-glucosamine = a lipid A disaccharide + UDP + H(+). Its pathway is glycolipid biosynthesis; lipid IV(A) biosynthesis; lipid IV(A) from (3R)-3-hydroxytetradecanoyl-[acyl-carrier-protein] and UDP-N-acetyl-alpha-D-glucosamine: step 5/6. Functionally, condensation of UDP-2,3-diacylglucosamine and 2,3-diacylglucosamine-1-phosphate to form lipid A disaccharide, a precursor of lipid A, a phosphorylated glycolipid that anchors the lipopolysaccharide to the outer membrane of the cell. The protein is Lipid-A-disaccharide synthase of Serratia proteamaculans (strain 568).